The chain runs to 96 residues: Large ribosomal subunit protein uL15 (96 aa).

The protein belongs to the universal ribosomal protein uL15 family. In terms of assembly, part of the 50S ribosomal subunit.

Binds to the 23S rRNA. The protein is Large ribosomal subunit protein uL15 (rplO) of Streptomyces scabiei.